The chain runs to 330 residues: RNA/RNP complex-1-interacting phosphatase (330 aa).

The segment covering 1-12 (MSQWHHPRSGWG) has biased composition (basic residues). Residues 1 to 32 (MSQWHHPRSGWGRRRDFSGRSSAKKKGGNHIP) form a disordered region. The Tyrosine-protein phosphatase domain maps to 61-208 (FEKKLAPEEC…LQNGPIRKNW (148 aa)). Cys-152 (phosphocysteine intermediate) is an active-site residue. 153-158 (THGLNR) lines the substrate pocket. The active-site Proton donor/acceptor is Arg-158.

Belongs to the protein-tyrosine phosphatase family. Non-receptor class dual specificity subfamily. In terms of assembly, monomer. May interact with SFRS7 and SFRS9/SRP30C.

The protein localises to the nucleus. Its subcellular location is the nucleus speckle. Possesses RNA 5'-triphosphatase and diphosphatase activities, but displays a poor protein-tyrosine phosphatase activity. In addition, has phosphatase activity with ATP, ADP and O-methylfluorescein phosphate (in vitro). Binds to RNA. May participate in nuclear mRNA metabolism. The chain is RNA/RNP complex-1-interacting phosphatase from Homo sapiens (Human).